A 129-amino-acid chain; its full sequence is Small ribosomal subunit protein uS11 (129 aa).

The protein belongs to the universal ribosomal protein uS11 family. As to quaternary structure, part of the 30S ribosomal subunit. Interacts with proteins S7 and S18. Binds to IF-3.

Functionally, located on the platform of the 30S subunit, it bridges several disparate RNA helices of the 16S rRNA. Forms part of the Shine-Dalgarno cleft in the 70S ribosome. The sequence is that of Small ribosomal subunit protein uS11 from Bacteroides thetaiotaomicron (strain ATCC 29148 / DSM 2079 / JCM 5827 / CCUG 10774 / NCTC 10582 / VPI-5482 / E50).